A 356-amino-acid polypeptide reads, in one-letter code: UDP-N-acetylglucosamine--N-acetylmuramyl-(pentapeptide) pyrophosphoryl-undecaprenol N-acetylglucosamine transferase (356 aa).

UDP-N-acetyl-alpha-D-glucosamine contacts are provided by residues 14-16 (TGG), asparagine 126, arginine 162, serine 190, isoleucine 244, and glutamine 289.

Belongs to the glycosyltransferase 28 family. MurG subfamily.

The protein resides in the cell inner membrane. The catalysed reaction is di-trans,octa-cis-undecaprenyl diphospho-N-acetyl-alpha-D-muramoyl-L-alanyl-D-glutamyl-meso-2,6-diaminopimeloyl-D-alanyl-D-alanine + UDP-N-acetyl-alpha-D-glucosamine = di-trans,octa-cis-undecaprenyl diphospho-[N-acetyl-alpha-D-glucosaminyl-(1-&gt;4)]-N-acetyl-alpha-D-muramoyl-L-alanyl-D-glutamyl-meso-2,6-diaminopimeloyl-D-alanyl-D-alanine + UDP + H(+). It functions in the pathway cell wall biogenesis; peptidoglycan biosynthesis. Its function is as follows. Cell wall formation. Catalyzes the transfer of a GlcNAc subunit on undecaprenyl-pyrophosphoryl-MurNAc-pentapeptide (lipid intermediate I) to form undecaprenyl-pyrophosphoryl-MurNAc-(pentapeptide)GlcNAc (lipid intermediate II). In Cupriavidus necator (strain ATCC 17699 / DSM 428 / KCTC 22496 / NCIMB 10442 / H16 / Stanier 337) (Ralstonia eutropha), this protein is UDP-N-acetylglucosamine--N-acetylmuramyl-(pentapeptide) pyrophosphoryl-undecaprenol N-acetylglucosamine transferase.